A 1589-amino-acid polypeptide reads, in one-letter code: Sterile alpha motif domain-containing protein 9 (1589 aa).

An SAM domain is found at 14–78 (WTKEDVNQWL…ELFKELRKTA (65 aa)). The interval 83–135 (IQTSKMGKPSKNAPKDQTVSQKERRETSKQKQKGKENPDMANPSAMSTTAKGS) is disordered. The span at 103–120 (QKERRETSKQKQKGKENP) shows a compositional bias: basic and acidic residues.

Interacts with RGL2. Interacts with EEA1. As to quaternary structure, (Microbial infection) Interacts with myxoma virus protein M062. In terms of tissue distribution, widely expressed. Very low levels are detected in skeletal muscle. Not detected in brain. Down-regulated in aggressive fibromatosis, as well as in breast and colon cancers. Up-regulated in fibroblasts from patients with normophosphatemic tumoral calcinosis (NFTC).

The protein localises to the cytoplasm. In terms of biological role, double-stranded nucleic acid binding that acts as an antiviral factor by playing an essential role in the formation of cytoplasmic antiviral granules. May play a role in the inflammatory response to tissue injury and the control of extra-osseous calcification, acting as a downstream target of TNF-alpha signaling. Involved in the regulation of EGR1, in coordination with RGL2. May be involved in endosome fusion. The sequence is that of Sterile alpha motif domain-containing protein 9 (SAMD9) from Homo sapiens (Human).